A 618-amino-acid chain; its full sequence is Probable arginine--tRNA ligase, cytoplasmic (618 aa).

Interaction with tRNA regions lie at residues 60–61 (ET) and 104–109 (NGIFLR). L-arginine is bound by residues 146-151 (EFSSPN), H160, Y359, D363, and Q387. The 'HIGH' region signature appears at 149 to 160 (SPNIAKPFHAGH). Positions 496 to 510 (DTGPYLQYAHSRLSS) are interaction with tRNA.

This sequence belongs to the class-I aminoacyl-tRNA synthetase family.

It localises to the cytoplasm. The catalysed reaction is tRNA(Arg) + L-arginine + ATP = L-arginyl-tRNA(Arg) + AMP + diphosphate. Its function is as follows. Forms part of a macromolecular complex that catalyzes the attachment of specific amino acids to cognate tRNAs during protein synthesis. This chain is Probable arginine--tRNA ligase, cytoplasmic (mrs1), found in Schizosaccharomyces pombe (strain 972 / ATCC 24843) (Fission yeast).